The sequence spans 650 residues: Probable acyl-CoA dehydrogenase FadE10 (650 aa).

The interval 1–23 (MAQQTQVTEEQARALAEESRESG) is disordered. Basic and acidic residues predominate over residues 10–23 (EQARALAEESRESG). The active-site Proton acceptor is the Glu-422.

Belongs to the acyl-CoA dehydrogenase family. The cofactor is FAD.

It catalyses the reaction a 2,3-saturated acyl-CoA + A = a 2,3-dehydroacyl-CoA + AH2. The chain is Probable acyl-CoA dehydrogenase FadE10 (fadE10) from Mycobacterium tuberculosis (strain CDC 1551 / Oshkosh).